The following is a 249-amino-acid chain: Phosphate import ATP-binding protein PstB 2 (249 aa).

An ABC transporter domain is found at 4–244 (FDIENLDLYY…PSDDRTRGYV (241 aa)). 36–43 (GPSGCGKS) serves as a coordination point for ATP.

This sequence belongs to the ABC transporter superfamily. Phosphate importer (TC 3.A.1.7) family. As to quaternary structure, the complex is composed of two ATP-binding proteins (PstB), two transmembrane proteins (PstC and PstA) and a solute-binding protein (PstS).

The protein localises to the cell inner membrane. The catalysed reaction is phosphate(out) + ATP + H2O = ADP + 2 phosphate(in) + H(+). In terms of biological role, part of the ABC transporter complex PstSACB involved in phosphate import. Responsible for energy coupling to the transport system. This chain is Phosphate import ATP-binding protein PstB 2, found in Vibrio vulnificus (strain CMCP6).